A 159-amino-acid polypeptide reads, in one-letter code: Ribosome maturation factor RimM (159 aa).

The PRC barrel domain occupies 86-159; that stretch reads SDAFHLPKLI…IHIETIEGLI (74 aa).

It belongs to the RimM family. Binds ribosomal protein uS19.

The protein localises to the cytoplasm. In terms of biological role, an accessory protein needed during the final step in the assembly of 30S ribosomal subunit, possibly for assembly of the head region. Essential for efficient processing of 16S rRNA. May be needed both before and after RbfA during the maturation of 16S rRNA. It has affinity for free ribosomal 30S subunits but not for 70S ribosomes. This is Ribosome maturation factor RimM from Acholeplasma laidlawii (strain PG-8A).